Consider the following 80-residue polypeptide: Large ribosomal subunit protein uL30 (80 aa).

This sequence belongs to the universal ribosomal protein uL30 family. In terms of assembly, part of the 50S ribosomal subunit.

This chain is Large ribosomal subunit protein uL30, found in Vesicomyosocius okutanii subsp. Calyptogena okutanii (strain HA).